The sequence spans 95 residues: DNA-directed RNA polymerase subunit Rpo11 (95 aa).

The protein belongs to the archaeal Rpo11/eukaryotic RPB11/RPC19 RNA polymerase subunit family. In terms of assembly, part of the RNA polymerase complex.

The protein localises to the cytoplasm. The catalysed reaction is RNA(n) + a ribonucleoside 5'-triphosphate = RNA(n+1) + diphosphate. DNA-dependent RNA polymerase (RNAP) catalyzes the transcription of DNA into RNA using the four ribonucleoside triphosphates as substrates. This Pyrococcus furiosus (strain ATCC 43587 / DSM 3638 / JCM 8422 / Vc1) protein is DNA-directed RNA polymerase subunit Rpo11.